The following is a 138-amino-acid chain: Large ribosomal subunit protein uL16 (138 aa).

Over residues 1-13 (MLQPARRKYRKEQ) the composition is skewed to basic residues. Residues 1–22 (MLQPARRKYRKEQKGRNTGVAT) form a disordered region.

Belongs to the universal ribosomal protein uL16 family. In terms of assembly, part of the 50S ribosomal subunit.

In terms of biological role, binds 23S rRNA and is also seen to make contacts with the A and possibly P site tRNAs. The polypeptide is Large ribosomal subunit protein uL16 (Polaromonas sp. (strain JS666 / ATCC BAA-500)).